The sequence spans 103 residues: Hexon-interlacing protein (103 aa).

Residues 25-45 (RQNVTGSDLGGKPVPSDVLES) form a disordered region. A coiled-coil region spans residues 72–99 (LDDLKTQVAAMQNSVTAIQEELKDLKQR).

This sequence belongs to the adenoviridae hexon-interlacing protein family. Homotrimer. Interacts with hexon protein; this interaction tethers the hexons together. Self-interacts with adjacent proteins. Interacts with kinesin light chain KLC1; this interaction leads to capsid disruption at the nuclear pore complex during virus entry into host cell.

The protein resides in the virion. The protein localises to the host nucleus. In terms of biological role, structural component of the virion that acts as a cement protein on the capsid exterior and forms triskelion structures consisting of three molecules that stabilize three hexon trimers at the center of each icosahedral facet and fixes the peripentonal hexons. Dispensable for assembly. During virus entry, recruits the anterograde motor kinesin-1 to the capsid docked at the nuclear pore complex thereby subjecting the docked capsid to a pulling force. The resulting tension leads to capsid disruption, dispersion of capsid fragments toward cell periphery and eventually viral DNA entry into the host nucleus. The polypeptide is Hexon-interlacing protein (Canine adenovirus serotype 1 (strain CLL) (CAdV-1)).